The chain runs to 557 residues: Anthrax toxin receptor-like (557 aa).

An N-terminal signal peptide occupies residues 1–25 (MRSHGRWGPCFLLFLLLLPPPLFRA). Residues 26–345 (GSLRYHGPGW…KSNVSVTSST (320 aa)) are Extracellular-facing. Residues 74 to 244 (DLYFILDKSG…KAMRDTVDAL (171 aa)) form the VWFA domain. S82, S84, and T148 together coordinate a divalent metal cation. Residues 346-366 (CGIFSNWLYFLLPLLLLPLLL) traverse the membrane as a helical segment. The Cytoplasmic segment spans residues 367 to 557 (CCLWRLCRKK…PTSKAPNTQD (191 aa)). Disordered stretches follow at residues 380 to 411 (EPPPVQKPEKEPEQEKPPPPPPPSPPPPLPPP) and 497 to 557 (ESPS…NTQD). The span at 386–395 (KPEKEPEQEK) shows a compositional bias: basic and acidic residues. A compositionally biased stretch (pro residues) spans 396–411 (PPPPPPPSPPPPLPPP). Over residues 534 to 557 (GTLQNPLCPSLPRSPTSKAPNTQD) the composition is skewed to polar residues.

It belongs to the ATR family.

It is found in the membrane. This Macaca fascicularis (Crab-eating macaque) protein is Anthrax toxin receptor-like (ANTXRL).